The following is a 587-amino-acid chain: Aspartate--tRNA ligase (587 aa).

Glutamate 174 provides a ligand contact to L-aspartate. Positions 198–201 (QITK) are aspartate. Arginine 220 provides a ligand contact to L-aspartate. ATP is bound by residues 220–222 (RDE) and glutamine 229. Histidine 443 is a binding site for L-aspartate. Glutamate 477 is a binding site for ATP. Arginine 484 serves as a coordination point for L-aspartate. Residue 529–532 (GLDR) participates in ATP binding.

Belongs to the class-II aminoacyl-tRNA synthetase family. Type 1 subfamily. In terms of assembly, homodimer.

It is found in the cytoplasm. It catalyses the reaction tRNA(Asp) + L-aspartate + ATP = L-aspartyl-tRNA(Asp) + AMP + diphosphate. Its function is as follows. Catalyzes the attachment of L-aspartate to tRNA(Asp) in a two-step reaction: L-aspartate is first activated by ATP to form Asp-AMP and then transferred to the acceptor end of tRNA(Asp). The protein is Aspartate--tRNA ligase of Streptococcus pneumoniae (strain 70585).